The following is a 552-amino-acid chain: Putative lipase ATG15 (552 aa).

The Cytoplasmic portion of the chain corresponds to 1–26; sequence MLHITEKEQTRGLRQLEKRGKRLLPP. Residues 27 to 49 traverse the membrane as a helical; Signal-anchor for type II membrane protein segment; it reads LIKFIWFCLISAACVAATTFYWL. Residues 50–552 lie on the Lumenal side of the membrane; the sequence is RLSPVHNIHK…WRFVSHDDKE (503 aa). Residues asparagine 63, asparagine 147, asparagine 239, asparagine 307, and asparagine 391 are each glycosylated (N-linked (GlcNAc...) asparagine). The active-site Charge relay system is the serine 409. A glycan (N-linked (GlcNAc...) asparagine) is linked at asparagine 526.

The protein belongs to the AB hydrolase superfamily. Lipase family. In terms of assembly, binds to both phosphatidylinositol (PI) and phosphatidylinositol 3,5-bisphosphate (PIP2).

The protein localises to the endosome. It is found in the multivesicular body membrane. The protein resides in the prevacuolar compartment membrane. It carries out the reaction a triacylglycerol + H2O = a diacylglycerol + a fatty acid + H(+). Functionally, lipase which is essential for lysis of subvacuolar cytoplasm to vacuole targeted bodies and intravacuolar autophagic bodies. Involved in the lysis of intravacuolar multivesicular body (MVB) vesicles. The intravacuolar membrane disintegration by ATG15 is critical to life span extension. The chain is Putative lipase ATG15 (ATG15) from Lodderomyces elongisporus (strain ATCC 11503 / CBS 2605 / JCM 1781 / NBRC 1676 / NRRL YB-4239) (Yeast).